The sequence spans 780 residues: Carboxysome assembly protein CsoS2 (780 aa).

Positions M1–K15 are enriched in basic and acidic residues. Disordered stretches follow at residues M1–E173, K189–L212, T226–V281, N330–G349, and S382–T444. One copy of the N-repeat 1 repeat lies at S5–S24. The span at A48–S78 shows a compositional bias: low complexity. Residues P86 to A105 form an N-repeat 2 repeat. The span at P86–V116 shows a compositional bias: basic and acidic residues. Positions A117 to A130 are enriched in low complexity. N-repeat repeat units lie at residues P175–A194 and T213–S235. 6 M-repeat repeats span residues K260–C309, K320–C369, K378–Y417, K431–C480, K490–A535, and T541–C599. The middle region stretch occupies residues K260–D608. Residues S264 to Q276 are compositionally biased toward low complexity. Low complexity-rich tracts occupy residues G387–G403 and V432–T444. The C-terminal domain stretch occupies residues S609 to N749. 2 C-repeat repeats span residues S623 to F669 and E693 to S726. 2 disordered regions span residues A631 to G661 and A686 to G780. Positions V641–R651 are enriched in polar residues. Positions T709 to T720 are enriched in basic and acidic residues. A C-terminal peptide region spans residues E750 to G780. Residues V759–K768 are compositionally biased toward polar residues.

Belongs to the CsoS2 family. As to quaternary structure, interacts via its N-terminal repeats with RuBisCO. Interacts with the major shell protein CsoS1. Post-translationally, unlike H.neapolitanus and predictions for P.marinus strain MIT 9313, this protein is not thought to have ribosomal frameshifting.

In terms of biological role, required for alpha-carboxysome (Cb) assembly, mediates interaction between RuBisCO and the carboxysome shell. The protein is probably intrinsically disordered. The C-terminal repeats act as the encapsulation signal to target proteins to the Cb; they are necessary and sufficient to target both CsoS2 and foreign proteins to the Cb. The N-terminal repeats of this protein bind simultaneously to both subunits of RuBisCO. Probably also interacts with the major shell proteins (CsoS1); that interaction would increase the local concentration of CsoS2 so that it can condense RuBisCO and full carboxysomes can be formed. This is Carboxysome assembly protein CsoS2 from Parasynechococcus marenigrum (strain WH8102).